Here is a 223-residue protein sequence, read N- to C-terminus: MMLITTSHRPTRRTRSFGHDLERVFPNSLYLTRGKKTIQELLMEAYDRGYERLLILNVWKGNPLKMTFIKVHPEDWGYLGYLYLHGIKLQREMGFKGLNPIREDMPLVVTTAKRVGWDHIAFAQVFAELTTGKFVPRGDKSLTYIADKYDTDVIAVIERHPRGMVINFYRLDVTKDRPVGPLINVKIWIMEDGRRWDYKEALGIKVPRREKGEGQESSSENRD.

The Brix domain occupies 1-196; sequence MMLITTSHRP…IWIMEDGRRW (196 aa).

In terms of biological role, probably involved in the biogenesis of the ribosome. The sequence is that of Probable Brix domain-containing ribosomal biogenesis protein from Pyrococcus furiosus (strain ATCC 43587 / DSM 3638 / JCM 8422 / Vc1).